A 1038-amino-acid polypeptide reads, in one-letter code: Translation initiation factor IF-2 (1038 aa).

Residues 48–426 (DALQGPGGNA…RQRRQEYEAM (379 aa)) are disordered. A compositionally biased stretch (low complexity) spans 58-87 (GKSAAKPGAPRKAAPAKPAAPSPAAAARPA). The segment covering 88-99 (APKPGAPAPKPA) has biased composition (pro residues). The segment covering 100 to 114 (EAPSSTPAAPSAPSA) has biased composition (low complexity). A compositionally biased stretch (pro residues) spans 115–125 (GPRPGPKPAPK). Low complexity predominate over residues 126–141 (AAPVTPVPAAEFSAPA). Positions 142 to 153 (PAQPAAPQPQAP) are enriched in pro residues. The segment covering 177–199 (DGGRDGGQRDGGRGGERGGDRPA) has biased composition (basic and acidic residues). Residues 200-219 (RPAGQGAPRPGGARPAGPRP) show a composition bias toward low complexity. A compositionally biased stretch (gly residues) spans 261-277 (SGPGGAPRPQGGQGQGG). The segment covering 299–315 (GNRPNPGMMPQRPAAGP) has biased composition (low complexity). The span at 319–406 (PGGGGRGPGG…GTQGAFGRPG (88 aa)) shows a compositional bias: gly residues. Positions 410 to 419 (RRGRKSKRQR) are enriched in basic residues. The tr-type G domain maps to 531–703 (SRPPVVTVMG…VVLTADASLD (173 aa)). A G1 region spans residues 540–547 (GHVDHGKT). 540-547 (GHVDHGKT) contacts GTP. The interval 565–569 (GITQH) is G2. Residues 590-593 (DTPG) are G3. GTP is bound by residues 590 to 594 (DTPGH) and 644 to 647 (NKID). The interval 644–647 (NKID) is G4. A G5 region spans residues 680–682 (SAK).

It belongs to the TRAFAC class translation factor GTPase superfamily. Classic translation factor GTPase family. IF-2 subfamily.

The protein resides in the cytoplasm. In terms of biological role, one of the essential components for the initiation of protein synthesis. Protects formylmethionyl-tRNA from spontaneous hydrolysis and promotes its binding to the 30S ribosomal subunits. Also involved in the hydrolysis of GTP during the formation of the 70S ribosomal complex. The sequence is that of Translation initiation factor IF-2 from Streptomyces griseus subsp. griseus (strain JCM 4626 / CBS 651.72 / NBRC 13350 / KCC S-0626 / ISP 5235).